A 564-amino-acid chain; its full sequence is Poly(U)-binding-splicing factor PUF60 (564 aa).

Residues 1–521 (MATATIALQV…EDAEIIVKIF (521 aa)) form an inhibits homodimerization region. Residues 37 to 61 (KWKPPQGTESIKMENGQSTGTKLGL) are disordered. A Glycyl lysine isopeptide (Lys-Gly) (interchain with G-Cter in SUMO2) cross-link involves residue Lys-48. Thr-65 carries the post-translational modification Phosphothreonine. Positions 82–564 (QSIKSVLVKQ…ERFDNSDLSA (483 aa)) are inhibits transcriptional repression, interaction with ERCC3 and apoptosis induction. A Glycyl lysine isopeptide (Lys-Gly) (interchain with G-Cter in SUMO2) cross-link involves residue Lys-85. Phosphoserine is present on Ser-117. RRM domains follow at residues 134-212 (CRVY…RPSN) and 231-309 (NRIY…KAVT). Ser-249 carries the phosphoserine modification. Position 256 is an N6-acetyllysine (Lys-256). The residue at position 319 (Thr-319) is a Phosphothreonine. The segment at 421–442 (KKEKEEEELFPESERPEMLSEQ) is disordered. Lys-424 participates in a covalent cross-link: Glycyl lysine isopeptide (Lys-Gly) (interchain with G-Cter in SUMO2). Residues 432–442 (ESERPEMLSEQ) are compositionally biased toward basic and acidic residues. Position 459 is an N6-acetyllysine (Lys-459). A Glycyl lysine isopeptide (Lys-Gly) (interchain with G-Cter in SUMO2) cross-link involves residue Lys-463. The 88-residue stretch at 467–554 (TVMVLRNMVD…RKVVAEVYDQ (88 aa)) folds into the RRM 3; atypical domain.

Belongs to the RRM half pint family. In terms of assembly, homodimer. Associates with the spliceosome. Found in a complex with RO60 and Y5 RNA. Found in a complex with FUBP1 and far upstream element (FUSE) DNA segment. Interacts directly with ERCC3. Interacts with CDK7 and GTF2H1. Interacts with SRSF11/P54. Interacts with ARGLU1; interaction may be involved in ARGLU1-mediated modulation of alternative splicing.

It is found in the nucleus. DNA- and RNA-binding protein, involved in several nuclear processes such as pre-mRNA splicing, apoptosis and transcription regulation. In association with FUBP1 regulates MYC transcription at the P2 promoter through the core-TFIIH basal transcription factor. Acts as a transcriptional repressor through the core-TFIIH basal transcription factor. Represses FUBP1-induced transcriptional activation but not basal transcription. Decreases ERCC3 helicase activity. Is also involved in pre-mRNA splicing. Promotes splicing of an intron with weak 3'-splice site and pyrimidine tract in a cooperative manner with U2AF2. Involved in apoptosis induction when overexpressed in HeLa cells. Modulates alternative splicing of several mRNAs. Binds to relaxed DNA of active promoter regions. Binds to the pyrimidine tract and 3'-splice site regions of pre-mRNA; binding is enhanced in presence of U2AF2. Binds to Y5 RNA in association with RO60. Binds to poly(U) RNA. The polypeptide is Poly(U)-binding-splicing factor PUF60 (Rattus norvegicus (Rat)).